Here is a 345-residue protein sequence, read N- to C-terminus: C5a anaphylatoxin chemotactic receptor 1 (345 aa).

The Extracellular portion of the chain corresponds to 1-32; it reads MMVTVSYDYDYNSTFLPDGFVDNYVERLSFGD. 2 positions are modified to sulfotyrosine: Tyr9 and Tyr11. Asn12 carries an N-linked (GlcNAc...) asparagine glycan. A helical membrane pass occupies residues 33-59; sequence LVAVVIMVVVFLVGVPGNALVVWVTAC. Residues 60–64 are Cytoplasmic-facing; the sequence is EARRH. The chain crosses the membrane as a helical span at residues 65–88; the sequence is INAIWFLNLAAADLLSCLALPILL. The Extracellular portion of the chain corresponds to 89–105; the sequence is VSTVHLNHWYFGDTACK. An intrachain disulfide couples Cys104 to Cys183. A helical transmembrane segment spans residues 106–127; sequence VLPSLILLNMYTSILLLATISA. The Cytoplasmic segment spans residues 128–148; that stretch reads DRLLLVLSPIWCQRFRGGCLA. Residues 149-169 traverse the membrane as a helical segment; sequence WTACGLAWVLALLLSSPSFLY. Residues 170 to 195 lie on the Extracellular side of the membrane; that stretch reads RRTHNEHFSFKVYCVTDYGRDISKER. The chain crosses the membrane as a helical span at residues 196 to 221; that stretch reads AVALVRLLVGFIVPLITLTACYTFLL. The Cytoplasmic portion of the chain corresponds to 222–237; it reads LRTWSRKATRSAKTVK. A helical transmembrane segment spans residues 238–260; sequence VVVAVVSSFFVFWLPYQVTGILL. Residues 261 to 277 are Extracellular-facing; that stretch reads AWHSPNSATYRNTKALD. Residues 278 to 298 form a helical membrane-spanning segment; it reads AVCVAFAYINCCINPIIYVVA. At 299 to 345 the chain is on the cytoplasmic side; sequence GHGFQGRLLKSLPSVLRNVLTEESLDKRHQSFARSTVDTMPQKSESV. Ser309, Ser312, Ser322, Ser329, and Ser333 each carry phosphoserine.

It belongs to the G-protein coupled receptor 1 family. As to quaternary structure, homodimer. May also form higher-order oligomers. Interacts (when phosphorylated) with ARRB1 and ARRB2; the interaction is associated with internalization of C5aR. In terms of processing, sulfation plays a critical role in the association of C5aR with C5a, but no significant role in the ability of the receptor to transduce a signal and mobilize calcium in response to a small peptide agonist. Phosphorylated on serine residues in response to C5a binding, resulting in internalization of the receptor and short-term desensitization to C5a. In terms of tissue distribution, expressed strongly in macrophages and spleen. Weak expression detected in lung, liver, brain, heart and kidney.

It is found in the cell membrane. It localises to the cytoplasmic vesicle. In terms of biological role, receptor for the chemotactic and inflammatory peptide anaphylatoxin C5a. The ligand interacts with at least two sites on the receptor: a high-affinity site on the extracellular N-terminus, and a second site in the transmembrane region which activates downstream signaling events. Receptor activation stimulates chemotaxis, granule enzyme release, intracellular calcium release and superoxide anion production. The sequence is that of C5a anaphylatoxin chemotactic receptor 1 (C5AR1) from Cavia porcellus (Guinea pig).